The sequence spans 417 residues: RH-like protein IIR (417 aa).

11 helical membrane-spanning segments follow: residues C12–T32, L44–F64, V77–F97, I125–V145, I172–P192, T203–F223, V238–L258, I265–C285, L287–G307, N331–T351, and M358–L378.

Belongs to the ammonium transporter (TC 2.A.49) family. Rh subfamily.

It localises to the membrane. Its function is as follows. May be part of an oligomeric complex which is likely to have a transport or channel function in the erythrocyte membrane. The polypeptide is RH-like protein IIR (Pan troglodytes (Chimpanzee)).